We begin with the raw amino-acid sequence, 284 residues long: UPF0276 protein PA14_21580 (284 aa).

This sequence belongs to the UPF0276 family.

This is UPF0276 protein PA14_21580 from Pseudomonas aeruginosa (strain UCBPP-PA14).